The chain runs to 804 residues: DNA gyrase subunit A (804 aa).

The 465-residue stretch at 31 to 495 (IPDVRDGLKP…QSIEYNEEEL (465 aa)) folds into the Topo IIA-type catalytic domain. Residue Y119 is the O-(5'-phospho-DNA)-tyrosine intermediate of the active site. Residues 522-528 (QKRGGKG) carry the GyrA-box motif.

This sequence belongs to the type II topoisomerase GyrA/ParC subunit family. Heterotetramer, composed of two GyrA and two GyrB chains. In the heterotetramer, GyrA contains the active site tyrosine that forms a transient covalent intermediate with DNA, while GyrB binds cofactors and catalyzes ATP hydrolysis.

It is found in the cytoplasm. The enzyme catalyses ATP-dependent breakage, passage and rejoining of double-stranded DNA.. In terms of biological role, a type II topoisomerase that negatively supercoils closed circular double-stranded (ds) DNA in an ATP-dependent manner to modulate DNA topology and maintain chromosomes in an underwound state. Negative supercoiling favors strand separation, and DNA replication, transcription, recombination and repair, all of which involve strand separation. Also able to catalyze the interconversion of other topological isomers of dsDNA rings, including catenanes and knotted rings. Type II topoisomerases break and join 2 DNA strands simultaneously in an ATP-dependent manner. The chain is DNA gyrase subunit A from Thermotoga maritima (strain ATCC 43589 / DSM 3109 / JCM 10099 / NBRC 100826 / MSB8).